A 181-amino-acid polypeptide reads, in one-letter code: UPF0397 protein STER_0346 (181 aa).

5 consecutive transmembrane segments (helical) span residues 11–31, 45–65, 72–92, 109–129, and 147–167; these read ATGIGAALFIIIGMFVNIPIF, LFSVIFGPITGFFMGFIGHAL, GNISWAWVLASGITGLVIGLF, IWFNLAQALGLLIGYGVVTPI, and FVAGVANFITIAIGGTLLLAI.

Belongs to the UPF0397 family.

The protein resides in the cell membrane. In Streptococcus thermophilus (strain ATCC BAA-491 / LMD-9), this protein is UPF0397 protein STER_0346.